Consider the following 360-residue polypeptide: Outer membrane protein P2 (360 aa).

The N-terminal stretch at 1–20 is a signal peptide; that stretch reads MKKTLAALIVGAFAASAANA.

Belongs to the Gram-negative porin family. Homotrimer.

The protein localises to the cell outer membrane. In terms of biological role, forms pores that allow passive diffusion of small molecules across the outer membrane. The polypeptide is Outer membrane protein P2 (ompP2) (Haemophilus influenzae).